A 160-amino-acid polypeptide reads, in one-letter code: MHRPENRADLTPDLTLVRLSHGEGLDLPAYETAGAAGMDLRAAVPADEPMTIRPGARTLVPTGFVFEIPAGHEGQIRPRSGLAFKHGITCLNTPGTVDSDYRGEVKVLLVNLGSDDFVVERGMRIAQMVIAPVTQMAIREADGASTTARGGGGFGSTGLS.

Substrate is bound by residues R79–G81, N92, T96–D98, and K106.

The protein belongs to the dUTPase family. Mg(2+) serves as cofactor.

It carries out the reaction dUTP + H2O = dUMP + diphosphate + H(+). It functions in the pathway pyrimidine metabolism; dUMP biosynthesis; dUMP from dCTP (dUTP route): step 2/2. This enzyme is involved in nucleotide metabolism: it produces dUMP, the immediate precursor of thymidine nucleotides and it decreases the intracellular concentration of dUTP so that uracil cannot be incorporated into DNA. In Sinorhizobium medicae (strain WSM419) (Ensifer medicae), this protein is Deoxyuridine 5'-triphosphate nucleotidohydrolase.